Consider the following 729-residue polypeptide: Sorting nexin mvp1 (729 aa).

Disordered regions lie at residues 1–43 (MSLF…SANL) and 177–340 (PLPK…EEPN). The 109-residue stretch at 356-464 (EETVTVNLLP…VMFLTVPTEL (109 aa)) folds into the PX domain. The a 1,2-diacyl-sn-glycero-3-phospho-(1D-myo-inositol-3-phosphate) site is built by arginine 392, serine 394, lysine 418, and arginine 431.

This sequence belongs to the sorting nexin family.

It is found in the cytoplasm. The protein localises to the membrane. Required for vacuolar protein sorting. The polypeptide is Sorting nexin mvp1 (mvp1) (Aspergillus fumigatus (strain ATCC MYA-4609 / CBS 101355 / FGSC A1100 / Af293) (Neosartorya fumigata)).